We begin with the raw amino-acid sequence, 40 residues long: Large ribosomal subunit protein bL36B (40 aa).

The protein belongs to the bacterial ribosomal protein bL36 family.

This chain is Large ribosomal subunit protein bL36B, found in Arthrobacter sp. (strain FB24).